Reading from the N-terminus, the 208-residue chain is Regulator of G-protein signaling 4 (208 aa).

S-palmitoyl cysteine attachment occurs at residues C2, C12, and C95. Residues 62-178 form the RGS domain; sequence SLENLIHHDR…LKSPYLDLVS (117 aa).

Palmitoylated on Cys-2 and/or Cys-12. In terms of processing, phosphorylated by cyclic GMP-dependent protein kinase. As to expression, expressed in the developing nervous system.

Its function is as follows. Inhibits signal transduction by increasing the GTPase activity of G protein alpha subunits thereby driving them into their inactive GDP-bound form. Activity on G(z)-alpha is inhibited by phosphorylation of the G-protein. Activity on G(z)-alpha and G(i)-alpha-1 is inhibited by palmitoylation of the G-protein. The protein is Regulator of G-protein signaling 4 (RGS4) of Gallus gallus (Chicken).